Reading from the N-terminus, the 361-residue chain is tRNA-specific 2-thiouridylase MnmA (361 aa).

ATP-binding positions include 11 to 18 and Met37; that span reads GMSGGVDS. Cys106 acts as the Nucleophile in catalysis. Cys106 and Cys202 are oxidised to a cystine. Gly130 provides a ligand contact to ATP. An interaction with tRNA region spans residues 152–154; sequence KDQ. Cys202 serves as the catalytic Cysteine persulfide intermediate. An interaction with tRNA region spans residues 308-309; the sequence is RY.

Belongs to the MnmA/TRMU family.

The protein localises to the cytoplasm. The catalysed reaction is S-sulfanyl-L-cysteinyl-[protein] + uridine(34) in tRNA + AH2 + ATP = 2-thiouridine(34) in tRNA + L-cysteinyl-[protein] + A + AMP + diphosphate + H(+). Its function is as follows. Catalyzes the 2-thiolation of uridine at the wobble position (U34) of tRNA, leading to the formation of s(2)U34. This chain is tRNA-specific 2-thiouridylase MnmA, found in Clostridium botulinum (strain Alaska E43 / Type E3).